Here is a 307-residue protein sequence, read N- to C-terminus: Membrane protein insertase YidC 2 (307 aa).

A signal peptide spans 1-23; the sequence is MKLTLNRILFSGLALSILLTLTG. Residue Cys-24 is the site of N-palmitoyl cysteine attachment. A lipid anchor (S-diacylglycerol cysteine) is attached at Cys-24. 5 consecutive transmembrane segments (helical) span residues 58 to 78, 135 to 155, 179 to 199, 209 to 225, and 231 to 251; these read LGYG…ILPL, LGGI…AMYF, VLTA…MMAV, TMMY…SFSL, and LYWL…TYLL. The disordered stretch occupies residues 263 to 307; that stretch reads YAKNPPKAYQSTSSRKDVTPSQNMEQANLPKKIKSNRNAGKQRKR. Residues 271 to 288 are compositionally biased toward polar residues; the sequence is YQSTSSRKDVTPSQNMEQ. Residues 293 to 307 are compositionally biased toward basic residues; the sequence is KKIKSNRNAGKQRKR.

This sequence belongs to the OXA1/ALB3/YidC family. Type 2 subfamily.

Its subcellular location is the cell membrane. In terms of biological role, required for the insertion and/or proper folding and/or complex formation of integral membrane proteins into the membrane. Involved in integration of membrane proteins that insert both dependently and independently of the Sec translocase complex, as well as at least some lipoproteins. The protein is Membrane protein insertase YidC 2 of Streptococcus pyogenes serotype M1.